Here is a 321-residue protein sequence, read N- to C-terminus: Cytochrome c biogenesis protein CcsA (321 aa).

Helical transmembrane passes span Ile-9–Leu-29, Gly-44–Gly-64, Leu-68–Ile-88, Met-143–Ile-163, Val-226–Asn-246, Thr-260–His-274, and Val-289–Ile-309.

Belongs to the CcmF/CycK/Ccl1/NrfE/CcsA family. In terms of assembly, may interact with Ccs1.

The protein localises to the plastid. It localises to the chloroplast thylakoid membrane. In terms of biological role, required during biogenesis of c-type cytochromes (cytochrome c6 and cytochrome f) at the step of heme attachment. This Oryza sativa subsp. indica (Rice) protein is Cytochrome c biogenesis protein CcsA.